Consider the following 547-residue polypeptide: uncharacterized protein (547 aa).

To B.subtilis RocB.

This is an uncharacterized protein from Bacillus subtilis (strain 168).